The sequence spans 246 residues: NLP effector protein 2 (246 aa).

A signal peptide spans 1-19; it reads MKFVVFLCAIAAVVATIQG. Residues 113–123 carry the Conserved undecapeptide motif I motif; sequence AIMYSWYFPKD. The short motif at 130–136 is the Hepta-peptide GHRHDWE motif II element; the sequence is GHRHDWE.

It belongs to the Necrosis inducing protein (NPP1) family.

The protein localises to the secreted. Functionally, secreted effector that contributes strongly to virulence during infection by P.capsici. Causes large necrotic areas in both host C.annuum and non-host N.benthamiana. This is NLP effector protein 2 from Phytophthora capsici.